We begin with the raw amino-acid sequence, 773 residues long: Carnitine O-palmitoyltransferase 1, liver isoform (773 aa).

At Ala2 the chain carries N-acetylalanine. Residues 2-47 are Cytoplasmic-facing; sequence AEAHQAVAFQFTVTPDGIDLRLSHEALRQIYLSGLHSWKKKFIRFK. The chain crosses the membrane as a helical span at residues 48 to 73; the sequence is NGIITGVYPASPSSWLIVVVGVMTTM. At 74 to 102 the chain is on the mitochondrial intermembrane side; that stretch reads YAKIDPSLGIIAKINRTLETANCMSSQTK. Residues 103-122 traverse the membrane as a helical segment; that stretch reads NVVSGVLFGTGLWVALIVTM. Residues 123–773 are Cytoplasmic-facing; the sequence is RYSLKVLLSY…LFGLSSNSKK (651 aa). 3'-nitrotyrosine is present on Tyr282. Catalysis depends on His473, which acts as the Proton acceptor. 555–567 is a CoA binding site; sequence GKGIIKKCRTSPD. Thr588 carries the phosphothreonine modification. At Tyr589 the chain carries 3'-nitrotyrosine. Tyr589 and Thr602 together coordinate (R)-carnitine. Thr604 is subject to Phosphothreonine. Ser741 and Ser747 each carry phosphoserine.

The protein belongs to the carnitine/choline acetyltransferase family. Homohexamer and homotrimer. Identified in a complex that contains at least CPT1A, ACSL1 and VDAC1. Also identified in complexes with ACSL1 and VDAC2 and VDAC3. Interacts with ZDHHC4. As to expression, strong expression in kidney and heart, and lower in liver and skeletal muscle.

Its subcellular location is the mitochondrion outer membrane. The catalysed reaction is (R)-carnitine + hexadecanoyl-CoA = O-hexadecanoyl-(R)-carnitine + CoA. The enzyme catalyses succinyl-CoA + L-lysyl-[protein] = N(6)-succinyl-L-lysyl-[protein] + CoA + H(+). Its pathway is lipid metabolism; fatty acid beta-oxidation. Its activity is regulated as follows. Inhibited by malonyl-CoA. Functionally, catalyzes the transfer of the acyl group of long-chain fatty acid-CoA conjugates onto carnitine, an essential step for the mitochondrial uptake of long-chain fatty acids and their subsequent beta-oxidation in the mitochondrion. Also possesses a lysine succinyltransferase activity that can regulate enzymatic activity of substrate proteins such as ENO1 and metabolism independent of its classical carnitine O-palmitoyltransferase activity. Plays an important role in hepatic triglyceride metabolism. Also plays a role in inducible regulatory T-cell (iTreg) differentiation once activated by butyryl-CoA that antagonizes malonyl-CoA-mediated CPT1A repression. Sustains the IFN-I response by recruiting ZDHCC4 to palmitoylate MAVS at the mitochondria leading to MAVS stabilization and activation. Promotes ROS-induced oxidative stress in liver injury via modulation of NFE2L2 and NLRP3-mediated signaling pathways. This Homo sapiens (Human) protein is Carnitine O-palmitoyltransferase 1, liver isoform.